A 449-amino-acid chain; its full sequence is Serine--tRNA ligase (449 aa).

T256–E258 is an L-serine binding site. R287–E289 contributes to the ATP binding site. E310 is a binding site for L-serine. E374–S377 contacts ATP. S410 is an L-serine binding site.

It belongs to the class-II aminoacyl-tRNA synthetase family. Type-1 seryl-tRNA synthetase subfamily. As to quaternary structure, homodimer. The tRNA molecule binds across the dimer.

Its subcellular location is the cytoplasm. It catalyses the reaction tRNA(Ser) + L-serine + ATP = L-seryl-tRNA(Ser) + AMP + diphosphate + H(+). It carries out the reaction tRNA(Sec) + L-serine + ATP = L-seryl-tRNA(Sec) + AMP + diphosphate + H(+). The protein operates within aminoacyl-tRNA biosynthesis; selenocysteinyl-tRNA(Sec) biosynthesis; L-seryl-tRNA(Sec) from L-serine and tRNA(Sec): step 1/1. In terms of biological role, catalyzes the attachment of serine to tRNA(Ser). Is also able to aminoacylate tRNA(Sec) with serine, to form the misacylated tRNA L-seryl-tRNA(Sec), which will be further converted into selenocysteinyl-tRNA(Sec). The chain is Serine--tRNA ligase from Xanthomonas oryzae pv. oryzae (strain MAFF 311018).